The primary structure comprises 489 residues: Cytochrome P450 monooxygenase prhB (489 aa).

A run of 3 helical transmembrane segments spans residues 1-21, 212-232, and 287-307; these read MFSFGFLITAVVFWVVTKVIY, VIFQCLGFFPWIKEPLVMIFA, and LFIGAGAESTATLLMGVAYLL. 2 N-linked (GlcNAc...) asparagine glycosylation sites follow: asparagine 347 and asparagine 379. Cysteine 431 serves as a coordination point for heme.

Belongs to the cytochrome P450 family. The cofactor is heme.

The protein localises to the membrane. It functions in the pathway secondary metabolite biosynthesis; terpenoid biosynthesis. In terms of biological role, cytochrome P450 monooxygenase; part of the gene cluster that mediates the biosynthesis of paraherquonin, a meroterpenoid with a unique, highly congested hexacyclic molecular architecture. The first step of the pathway is the synthesis of 3,5-dimethylorsellinic acid (DMOA) by the polyketide synthase prhL. Synthesis of DMOA is followed by farnesylation by the prenyltransferase prhE, methylesterification by the methyl-transferase prhM, epoxidation of the prenyl chain by the flavin-dependent monooxygenase prhF, and cyclization of the farnesyl moiety by the terpene cyclase prhH, to yield the tetracyclic intermediate, protoaustinoid A. The short chain dehydrogenase prhI then oxidizes the C-3 alcohol group of the terpene cyclase product to transform protoaustinoid A into protoaustinoid B. The FAD-binding monooxygenase prhJ catalyzes the oxidation of protoaustinoid B into preaustinoid A which is further oxidized into preaustinoid A1 by FAD-binding monooxygenase phrK. Finally, prhA leads to berkeleydione via the berkeleyone B intermediate. PrhA is a multifunctional dioxygenase that first desaturates at C5-C6 to form berkeleyone B, followed by rearrangement of the A/B-ring to form the cycloheptadiene moiety in berkeleydione. Berkeleydione serves as the key intermediate for the biosynthesis of paraherquonin as well as many other meroterpenoids. The cytochrome P450 monooxygenases prhB, prhD, and prhN, as well as the isomerase prhC, are probably involved in the late stage of paraherquonin biosynthesis, after the production of berkeleydione. Especially prhC might be a multifunctional enzyme that catalyzes the D-ring expansion via intramolecular methoxy rearrangement, as well as the hydrolysis of the expanded D-ring. This chain is Cytochrome P450 monooxygenase prhB, found in Penicillium brasilianum.